The sequence spans 362 residues: Dihydroorotate dehydrogenase (quinone) (362 aa).

FMN is bound by residues 62–66 (AGYDK) and threonine 86. Lysine 66 contributes to the substrate binding site. A substrate-binding site is contributed by 111-115 (NRLGF). Asparagine 139 and asparagine 170 together coordinate FMN. Asparagine 170 is a substrate binding site. Residue serine 173 is the Nucleophile of the active site. Position 175 (asparagine 175) interacts with substrate. FMN is bound by residues lysine 215 and serine 243. 244–245 (NT) is a binding site for substrate. Residues glycine 266, glycine 295, and 316-317 (YS) contribute to the FMN site.

The protein belongs to the dihydroorotate dehydrogenase family. Type 2 subfamily. As to quaternary structure, monomer. Requires FMN as cofactor.

It is found in the cell membrane. The enzyme catalyses (S)-dihydroorotate + a quinone = orotate + a quinol. The protein operates within pyrimidine metabolism; UMP biosynthesis via de novo pathway; orotate from (S)-dihydroorotate (quinone route): step 1/1. In terms of biological role, catalyzes the conversion of dihydroorotate to orotate with quinone as electron acceptor. In Rhizobium meliloti (strain 1021) (Ensifer meliloti), this protein is Dihydroorotate dehydrogenase (quinone).